The chain runs to 320 residues: Serpentine receptor class delta-40 (320 aa).

7 helical membrane passes run 12 to 32 (IFYPIFFIFSTITQLMLIYLI), 42 to 62 (MLKVFLLNTSLFQIILVVVSC), 95 to 115 (YQVLQTSAFMSGMSILITFVF), 133 to 153 (IILLFHMPIIASMVMEVIMVI), 189 to 209 (LINFLLISGSVVASPFISFFF), 243 to 263 (AFLPLIFYVPVFGLYFYCILT), and 273 to 293 (FMTVVPCLPAFFDPMLTLYFV).

It belongs to the nematode receptor-like protein srd family.

Its subcellular location is the membrane. This is Serpentine receptor class delta-40 (srd-40) from Caenorhabditis elegans.